The sequence spans 209 residues: Thymidine kinase (209 aa).

ATP-binding positions include 9 to 16 (AAMNAGKS) and 88 to 91 (DEAQ). The active-site Proton acceptor is the E89. Zn(2+) is bound by residues C146, C148, C183, and H186.

It belongs to the thymidine kinase family. In terms of assembly, homotetramer.

It localises to the cytoplasm. It catalyses the reaction thymidine + ATP = dTMP + ADP + H(+). In Legionella pneumophila (strain Lens), this protein is Thymidine kinase.